Reading from the N-terminus, the 111-residue chain is Large ribosomal subunit protein uL22 (111 aa).

It belongs to the universal ribosomal protein uL22 family. Part of the 50S ribosomal subunit.

Its function is as follows. This protein binds specifically to 23S rRNA; its binding is stimulated by other ribosomal proteins, e.g. L4, L17, and L20. It is important during the early stages of 50S assembly. It makes multiple contacts with different domains of the 23S rRNA in the assembled 50S subunit and ribosome. In terms of biological role, the globular domain of the protein is located near the polypeptide exit tunnel on the outside of the subunit, while an extended beta-hairpin is found that lines the wall of the exit tunnel in the center of the 70S ribosome. The chain is Large ribosomal subunit protein uL22 from Chlamydia caviae (strain ATCC VR-813 / DSM 19441 / 03DC25 / GPIC) (Chlamydophila caviae).